The chain runs to 117 residues: Gamma-aminobutyric acid receptor-associated protein-like 1 (117 aa).

G116 carries the Phosphatidylethanolamine amidated glycine; alternate lipid modification. Residue G116 is the site of Phosphatidylserine amidated glycine; alternate attachment. Residue K117 is a propeptide, removed in mature form.

This sequence belongs to the ATG8 family. In terms of assembly, interacts with ATG13, OPRK1, RB1CC1 and ULK1. Interacts with TP53INP1 and TP53INP2. Directly interacts with SQSTM1. Interacts with ATG3, ATG7 and MAP15. Interacts with TECPR2. Interacts with TBC1D5. Interacts with MAPK15. Interacts with TRIM5. Interacts with MEFV and TRIM21. Interacts with WDFY3. Interacts with the reticulophagy receptor TEX264. Interacts with UBA5. Interacts with KBTBD6 and KBTBD7; the interaction is direct. Interacts with reticulophagy regulators RETREG1, RETREG2 and RETREG3. Interacts with IRGM. Interacts with DNM2. Interacts with NCOA4 (via C-terminus). In terms of processing, the precursor molecule is cleaved by ATG4 (ATG4A, ATG4B, ATG4C or ATG4D) to expose the glycine at the C-terminus and form the cytosolic form, GABARAPL1-I. The processed form is then activated by APG7L/ATG7, transferred to ATG3 and conjugated to phosphatidylethanolamine (PE) phospholipid to form the membrane-bound form, GABARAPL1-II. During non-canonical autophagy, the processed form is conjugated to phosphatidylserine (PS) phospholipid. ATG4 proteins also mediate the delipidation of PE-conjugated forms required for GABARAPL1 recycling when autophagosomes fuse with lysosomes. In addition, ATG4B and ATG4D mediate delipidation of ATG8 proteins conjugated to PS during non-canonical autophagy. ATG4B constitutes the major protein for proteolytic activation. ATG4D is the main enzyme for delipidation activity.

The protein localises to the cytoplasmic vesicle. Its subcellular location is the autophagosome. The protein resides in the cytoplasmic vesicle membrane. It is found in the cytoplasm. It localises to the cytoskeleton. The protein localises to the endoplasmic reticulum. Its subcellular location is the golgi apparatus. Functionally, ubiquitin-like modifier that increases cell-surface expression of kappa-type opioid receptor through facilitating anterograde intracellular trafficking of the receptor. Involved in formation of autophagosomal vacuoles. While LC3s are involved in elongation of the phagophore membrane, the GABARAP/GATE-16 subfamily is essential for a later stage in autophagosome maturation. Through its interaction with the reticulophagy receptor TEX264, participates in the remodeling of subdomains of the endoplasmic reticulum into autophagosomes upon nutrient stress, which then fuse with lysosomes for endoplasmic reticulum turnover. The chain is Gamma-aminobutyric acid receptor-associated protein-like 1 from Pongo abelii (Sumatran orangutan).